The following is a 1644-amino-acid chain: Kinesin-like protein unc-104 (1644 aa).

One can recognise a Kinesin motor domain in the interval Ser3 to Ile351. Gly97–Ser104 serves as a coordination point for ATP. A coiled-coil region spans residues Asn358–Glu436. The region spanning Thr499–Gly565 is the FHA domain. Basic and acidic residues predominate over residues His574–Gly591. Positions His574–Ala598 are disordered. The stretch at Glu631–Tyr672 forms a coiled coil. Disordered regions lie at residues Glu953 to Gly985 and His1419 to Glu1440. The segment covering Glu969 to Pro984 has biased composition (basic and acidic residues). Over residues Thr1428–Thr1437 the composition is skewed to polar residues. One can recognise a PH domain in the interval Val1542–Ala1640.

It belongs to the TRAFAC class myosin-kinesin ATPase superfamily. Kinesin family. Unc-104 subfamily. In terms of assembly, monomer.

It localises to the cytoplasm. It is found in the cytoskeleton. In terms of biological role, required for presynaptic maturation, has a role in axonal transport of dense-core vesicles carrying synaptic vesicle precursors, components required for the morphological transformation of axonal growth cones to mature boutons. The chain is Kinesin-like protein unc-104 from Aedes aegypti (Yellowfever mosquito).